Reading from the N-terminus, the 144-residue chain is Large ribosomal subunit protein uL15 (144 aa).

The disordered stretch occupies residues 1 to 53 (MRLNTLSPAEGAKHSAKRLGRGIGSGLGKTGGRGHKGQKSRTGGGVRRGFEGG). The span at 21–31 (RGIGSGLGKTG) shows a compositional bias: gly residues.

This sequence belongs to the universal ribosomal protein uL15 family. In terms of assembly, part of the 50S ribosomal subunit.

Its function is as follows. Binds to the 23S rRNA. In Pasteurella multocida (strain Pm70), this protein is Large ribosomal subunit protein uL15.